Reading from the N-terminus, the 733-residue chain is Neutral ceramidase 3 (733 aa).

Positions 1–25 are cleaved as a signal peptide; that stretch reads MTRWSMSMHCTLFLLFLLRLTCIFS. Residue S307 is the Nucleophile of the active site. N325 carries N-linked (GlcNAc...) asparagine glycosylation.

This sequence belongs to the neutral ceramidase family.

Its subcellular location is the secreted. The protein localises to the endoplasmic reticulum. It localises to the golgi apparatus. The enzyme catalyses an N-acylsphing-4-enine + H2O = sphing-4-enine + a fatty acid. Functionally, hydrolyzes the sphingolipid ceramide into sphingosine and free fatty acid. Promotes oxidative stress resistance. In Arabidopsis thaliana (Mouse-ear cress), this protein is Neutral ceramidase 3.